The chain runs to 448 residues: F-box/FBD/LRR-repeat protein At2g04230 (448 aa).

The F-box domain occupies 12–64 (EDRISDLPDALLLQILSSLPTENAIATSVLSKRWRSLWTMLPKLKFDSNFNPV). LRR repeat units lie at residues 72–98 (PTMFSENVYKTLSLHKAPVLESLHLSF), 149–176 (ILKLKCAIDLDFPSRVCLKSLRKLYLDQ), 177–202 (VHFKDEESVCNLLCGCPSLQDLVVHR), 204–225 (SNADVATFTIASPSLQRLTIED), 226–251 (LRQEGGYGNGSYVINAPGLKYLNING), 271–296 (ISNVSGITNENILESLTSAKRLILHL), and 319–345 (THEREWWNLLSIMLDSSPKLQILKLTD). One can recognise an FBD domain in the interval 359–410 (KWNPPKCAPECLLFHLETFLWIGYEWQRGDEKEVATYILENARRLKKATFST).

The chain is F-box/FBD/LRR-repeat protein At2g04230 from Arabidopsis thaliana (Mouse-ear cress).